The following is a 119-amino-acid chain: Integration host factor subunit beta (119 aa).

A disordered region spans residues 91–119 (DLVGNDQGDDSSNGSSDPLQSVMDMHAMH). Residues 94 to 107 (GNDQGDDSSNGSSD) are compositionally biased toward low complexity.

This sequence belongs to the bacterial histone-like protein family. As to quaternary structure, heterodimer of an alpha and a beta chain.

This protein is one of the two subunits of integration host factor, a specific DNA-binding protein that functions in genetic recombination as well as in transcriptional and translational control. The polypeptide is Integration host factor subunit beta (Bordetella parapertussis (strain 12822 / ATCC BAA-587 / NCTC 13253)).